A 789-amino-acid chain; its full sequence is LPS-assembly protein LptD (789 aa).

Positions 1-39 are cleaved as a signal peptide; sequence MPPRQLSQTTPSCAVVPRKRRLVAALIAVPGLMPALAHA.

It belongs to the LptD family. As to quaternary structure, component of the lipopolysaccharide transport and assembly complex. Interacts with LptE and LptA.

It localises to the cell outer membrane. Its function is as follows. Together with LptE, is involved in the assembly of lipopolysaccharide (LPS) at the surface of the outer membrane. This chain is LPS-assembly protein LptD, found in Paraburkholderia xenovorans (strain LB400).